A 1056-amino-acid polypeptide reads, in one-letter code: PAX-interacting protein 1 (1056 aa).

BRCT domains lie at 8 to 93 and 94 to 183; these read VPEE…GFSP and ESCQ…FYHP. Residues 94-183 are interaction with PAGR1; sequence ESCQIFFGLT…RRKDEAFYHP (90 aa). Over residues 188–205 the composition is skewed to acidic residues; it reads YEEEEEEEEEGDNEEQDS. 3 disordered regions span residues 188 to 276, 393 to 412, and 419 to 486; these read YEEE…QRRL, THVL…HPAL, and MQLQ…FQQQ. The segment covering 214 to 223 has biased composition (low complexity); it reads SSVASSAVAS. Phosphoserine is present on residues serine 223 and serine 230. 3 stretches are compositionally biased toward low complexity: residues 396 to 412, 419 to 435, and 445 to 486; these read LQQH…HPAL, MQLQ…QQQP, and QFPQ…FQQQ. The interaction with TP53BP1 stretch occupies residues 577–1056; that stretch reads QLFGHDPAVE…TLDYESYKFN (480 aa). BRCT domains follow at residues 588–681, 688–776, 853–934, and 955–989; these read PEES…RALH, PGGK…VQYS, TPLV…NYIL, and HVSP…GGKV. Positions 655-672 match the Nuclear localization signal motif; sequence RKRCVTAHWLNTVLKKKK.

In terms of assembly, interacts with the C-terminal transactivation domain of PAX2. Forms a constitutive complex with PAGR1 independently of the MLL2/MLL3 complex. Interacts with TP53BP1 (when phosphorylated at the N-terminus by ATM). Interacts with HLTF. Component of the KMT2 family MLL2/MLL3 complex (also named ASCOM complex), at least composed of the HMTs KMT2D and/or KMT2C, the common subunits ASH2L, RBBP5, WDR5 and DPY30, and the complex type-specific subunits PAXIP1/PTIP, PAGR1, NCOA6 and KDM6A; required for the association of PAGR1 with the MLL2/MLL3 complex. Interacts with NUPR1; this interaction prevents PAXIP1 inhibition of PAX2 transcription factor activity. In terms of tissue distribution, expression detected in all tissues examined, including brain stem, cerebellum, cortex, heart, spleen, kidney, liver, thymus and lung.

The protein localises to the nucleus matrix. It is found in the chromosome. In terms of biological role, involved in DNA damage response and in transcriptional regulation through histone methyltransferase (HMT) complexes such as the MLL2/MLL3 complex. Plays a role in early development. In DNA damage response is required for cell survival after ionizing radiation. In vitro shown to be involved in the homologous recombination mechanism for the repair of double-strand breaks (DSBs). Its localization to DNA damage foci requires Rnf8 and Ube2n. Recruits Tp53bp1 to DNA damage foci and, at least in particular repair processes, effective DNA damage response appears to require the association with Tp53bp1 phosphorylated by Atm. Together with Tp53bp1 regulates Atm association. Proposed to recruit Pagr1 to sites of DNA damage and the Pagr1:Paxip1 complex is required for cell survival in response to DNA damage independently of the MLL2/MLL3 complex. However, this function has been questioned. Promotes ubiquitination of PCNA following UV irradiation and may regulate recruitment of polymerase eta and Rad51 to chromatin after DNA damage. Proposed to be involved in transcriptional regulation by linking MLL-containing histone methyltransferase (HMT) complexes to gene promoters by interacting with promoter-bound transcription factors such as Pax2. Associates with gene promoters that are known to be regulated by Kmt2d/Mll2. During immunoglobulin class switching in activated B-cells is involved in trimethylation of histone H3 at 'Lys-4' and in transcription initiation of downstream switch regions at the immunoglobulin heavy-chain (Igh) locus; this function appears to involve the recruitment of MLL-containing HMT complexes. Conflictingly, its function in transcriptional regulation during immunoglobulin class switching is reported to be independent of the MLL2/MLL3 complex. In Mus musculus (Mouse), this protein is PAX-interacting protein 1 (Paxip1).